Here is a 525-residue protein sequence, read N- to C-terminus: Probable protein kinase UbiB (525 aa).

The 383-residue stretch at 118 to 500 (DFERVPVASA…QKRTNRLLQG (383 aa)) folds into the Protein kinase domain. Residues 124-132 (VASASIAQV) and Lys150 contribute to the ATP site. Asp285 (proton acceptor) is an active-site residue. Residues 501–521 (LLLFGVAVGVGAVLARAFLAL) form a helical membrane-spanning segment.

It belongs to the ABC1 family. UbiB subfamily.

It localises to the cell inner membrane. Its pathway is cofactor biosynthesis; ubiquinone biosynthesis [regulation]. In terms of biological role, is probably a protein kinase regulator of UbiI activity which is involved in aerobic coenzyme Q (ubiquinone) biosynthesis. This is Probable protein kinase UbiB from Paraburkholderia phytofirmans (strain DSM 17436 / LMG 22146 / PsJN) (Burkholderia phytofirmans).